Consider the following 148-residue polypeptide: Macrodomain Ter protein (148 aa).

Belongs to the MatP family. In terms of assembly, homodimer.

The protein resides in the cytoplasm. In terms of biological role, required for spatial organization of the terminus region of the chromosome (Ter macrodomain) during the cell cycle. Prevents early segregation of duplicated Ter macrodomains during cell division. Binds specifically to matS, which is a 13 bp signature motif repeated within the Ter macrodomain. This chain is Macrodomain Ter protein, found in Aliivibrio salmonicida (strain LFI1238) (Vibrio salmonicida (strain LFI1238)).